Here is a 77-residue protein sequence, read N- to C-terminus: Conotoxin VnMKLT1-012 (77 aa).

Positions 1-22 are cleaved as a signal peptide; sequence MKLTCMMIVAVLFLTAWTFVTA. The propeptide occupies 23 to 48; sequence DDSRNGLDYLFPKARHEMNPKASRDI. 3 cysteine pairs are disulfide-bonded: Cys51-Cys68, Cys58-Cys72, and Cys67-Cys76.

Belongs to the conotoxin O1 superfamily. In terms of tissue distribution, expressed by the venom duct.

The protein localises to the secreted. The chain is Conotoxin VnMKLT1-012 from Conus ventricosus (Mediterranean cone).